The primary structure comprises 620 residues: Endoglucanase 21 (620 aa).

Residues 1–39 (MYGRDPWGGPLEINAADSMTDDDRSRNLQDLDRATPSRP) are disordered. Over 1-70 (MYGRDPWGGP…DLGCILVSRK (70 aa)) the chain is Cytoplasmic. The span at 21–39 (DDDRSRNLQDLDRATPSRP) shows a compositional bias: basic and acidic residues. Residues 71 to 91 (IFLWTLGTIVVTALLSGFITL) traverse the membrane as a helical; Signal-anchor for type II membrane protein segment. Residues 92–620 (IVKTLPHHHH…TPPPPAPWTP (529 aa)) are Extracellular-facing. 2 N-linked (GlcNAc...) asparagine glycosylation sites follow: Asn108 and Asn134. Asp166 serves as the catalytic Nucleophile. 6 N-linked (GlcNAc...) asparagine glycosylation sites follow: Asn217, Asn325, Asn346, Asn409, Asn426, and Asn482. Residues His514 and Asp561 contribute to the active site. N-linked (GlcNAc...) asparagine glycosylation is present at Asn567. Glu570 is an active-site residue.

It belongs to the glycosyl hydrolase 9 (cellulase E) family. Expressed in conductive tissues of young roots, cotyledons, rosette leaves, cauline leaves and sepals. Expressed in the leaf trichome support cells.

The protein resides in the cell membrane. The catalysed reaction is Endohydrolysis of (1-&gt;4)-beta-D-glucosidic linkages in cellulose, lichenin and cereal beta-D-glucans.. The chain is Endoglucanase 21 (KOR3) from Arabidopsis thaliana (Mouse-ear cress).